The sequence spans 397 residues: Lysophospholipid transporter LplT (397 aa).

Residues 1 to 17 (MSESVHTNTSLWSKGMK) are Periplasmic-facing. The helical transmembrane segment at 18–38 (AVIVAQFLSAFGDNALLFATL) threads the bilayer. Over 39 to 52 (ALLKAQFYPEWSQP) the chain is Cytoplasmic. A helical membrane pass occupies residues 53 to 73 (ILQMVFVGAYILFAPFVGQVA). Topologically, residues 74–90 (DSFAKGRVMMFANGLKL) are periplasmic. The chain crosses the membrane as a helical span at residues 91–111 (LGAASICFGINPFLGYTLVGV). Residues 112 to 144 (GAAAYSPAKYGILGELTTGSKLVKANGLMEAST) are Cytoplasmic-facing. A helical membrane pass occupies residues 145–165 (IAAILLGSVAGGVLADWHVLV). A topological domain (periplasmic) is located at residue alanine 166. The chain crosses the membrane as a helical span at residues 167–187 (LAACALAYGGAVVANIYIPKL). Residues 188 to 226 (AAARPGQSWNLISMTRSFLNACTSLWRNGETRFSLVGTS) lie on the Cytoplasmic side of the membrane. Residues 227 to 247 (LFWGAGVTLRFLLVLWVPVAL) traverse the membrane as a helical segment. Over 248-256 (GITDNATPT) the chain is Periplasmic. The helical transmembrane segment at 257–277 (YLNAMVAIGIVVGAGAAAKLV) threads the bilayer. Residues 278–280 (TLE) lie on the Cytoplasmic side of the membrane. The chain crosses the membrane as a helical span at residues 281-301 (TVSRCMPAGILIGVVVLIFSL). Over 302-304 (QHE) the chain is Periplasmic. A helical transmembrane segment spans residues 305–325 (LLPAYALLMLIGVLGGFFVVP). Residues 326–343 (LNALLQERGKKSVGAGNA) are Cytoplasmic-facing. The chain crosses the membrane as a helical span at residues 344 to 364 (IAVQNLGENSAMLLMLGIYSL). The Periplasmic portion of the chain corresponds to 365–366 (AV). A helical transmembrane segment spans residues 367-387 (MVGIPVVPIGIGFGALFALAI). The Cytoplasmic portion of the chain corresponds to 388–397 (TALWIWQRRH).

This sequence belongs to the major facilitator superfamily. LplT (TC 2.A.1.42) family.

The protein resides in the cell inner membrane. Catalyzes the facilitated diffusion of 2-acyl-glycero-3-phosphoethanolamine (2-acyl-GPE) into the cell. The polypeptide is Lysophospholipid transporter LplT (Escherichia coli O7:K1 (strain IAI39 / ExPEC)).